Reading from the N-terminus, the 296-residue chain is Acetylglutamate kinase (296 aa).

Residues 67 to 68 (GG), Arg-89, and Asn-194 each bind substrate.

This sequence belongs to the acetylglutamate kinase family. ArgB subfamily.

Its subcellular location is the cytoplasm. The enzyme catalyses N-acetyl-L-glutamate + ATP = N-acetyl-L-glutamyl 5-phosphate + ADP. Its pathway is amino-acid biosynthesis; L-arginine biosynthesis; N(2)-acetyl-L-ornithine from L-glutamate: step 2/4. Its function is as follows. Catalyzes the ATP-dependent phosphorylation of N-acetyl-L-glutamate. The protein is Acetylglutamate kinase of Syntrophus aciditrophicus (strain SB).